The sequence spans 496 residues: Probable ATP-dependent DNA helicase RecS (496 aa).

Positions 25 to 192 (IESILSGKDT…MNLLELQHAV (168 aa)) constitute a Helicase ATP-binding domain. 38-45 (LPTGGGKS) lines the ATP pocket. The DEAH box signature appears at 136–139 (DEAH). Positions 219 to 363 (RVIQLVENLQ…EIADVIRVLE (145 aa)) constitute a Helicase C-terminal domain.

It belongs to the helicase family. RecQ subfamily. As to quaternary structure, interacts with SSB (ssbA) and YpbB.

Its subcellular location is the cytoplasm. It is found in the nucleoid. The enzyme catalyses Couples ATP hydrolysis with the unwinding of duplex DNA by translocating in the 3'-5' direction.. The catalysed reaction is ATP + H2O = ADP + phosphate + H(+). Its function is as follows. Probable 3'-5' DNA helicase. Required in synaptic and/or post-synaptic stages of recombination. Probably has an overlapping function with RecQ. It probably acts to help generate ss-DNA from ds-DNA breaks. This chain is Probable ATP-dependent DNA helicase RecS, found in Bacillus subtilis (strain 168).